Reading from the N-terminus, the 375-residue chain is Queuine tRNA-ribosyltransferase (375 aa).

Aspartate 90 serves as the catalytic Proton acceptor. Substrate is bound by residues 90–94, aspartate 144, glutamine 193, and glycine 220; that span reads DSGGF. Residues 251–257 form an RNA binding region; it reads GVGTPED. The Nucleophile role is filled by aspartate 270. An RNA binding; important for wobble base 34 recognition region spans residues 275–279; that stretch reads TRNAR. Zn(2+) contacts are provided by cysteine 308, cysteine 310, cysteine 313, and histidine 339.

Belongs to the queuine tRNA-ribosyltransferase family. In terms of assembly, homodimer. Within each dimer, one monomer is responsible for RNA recognition and catalysis, while the other monomer binds to the replacement base PreQ1. Zn(2+) is required as a cofactor.

It catalyses the reaction 7-aminomethyl-7-carbaguanine + guanosine(34) in tRNA = 7-aminomethyl-7-carbaguanosine(34) in tRNA + guanine. Its pathway is tRNA modification; tRNA-queuosine biosynthesis. Functionally, catalyzes the base-exchange of a guanine (G) residue with the queuine precursor 7-aminomethyl-7-deazaguanine (PreQ1) at position 34 (anticodon wobble position) in tRNAs with GU(N) anticodons (tRNA-Asp, -Asn, -His and -Tyr). Catalysis occurs through a double-displacement mechanism. The nucleophile active site attacks the C1' of nucleotide 34 to detach the guanine base from the RNA, forming a covalent enzyme-RNA intermediate. The proton acceptor active site deprotonates the incoming PreQ1, allowing a nucleophilic attack on the C1' of the ribose to form the product. After dissociation, two additional enzymatic reactions on the tRNA convert PreQ1 to queuine (Q), resulting in the hypermodified nucleoside queuosine (7-(((4,5-cis-dihydroxy-2-cyclopenten-1-yl)amino)methyl)-7-deazaguanosine). The chain is Queuine tRNA-ribosyltransferase from Janthinobacterium sp. (strain Marseille) (Minibacterium massiliensis).